Here is a 236-residue protein sequence, read N- to C-terminus: 1-(5-phosphoribosyl)-5-[(5-phosphoribosylamino)methylideneamino] imidazole-4-carboxamide isomerase (236 aa).

The active-site Proton acceptor is the aspartate 8. Aspartate 127 functions as the Proton donor in the catalytic mechanism.

Belongs to the HisA/HisF family.

It localises to the cytoplasm. The enzyme catalyses 1-(5-phospho-beta-D-ribosyl)-5-[(5-phospho-beta-D-ribosylamino)methylideneamino]imidazole-4-carboxamide = 5-[(5-phospho-1-deoxy-D-ribulos-1-ylimino)methylamino]-1-(5-phospho-beta-D-ribosyl)imidazole-4-carboxamide. It functions in the pathway amino-acid biosynthesis; L-histidine biosynthesis; L-histidine from 5-phospho-alpha-D-ribose 1-diphosphate: step 4/9. The protein is 1-(5-phosphoribosyl)-5-[(5-phosphoribosylamino)methylideneamino] imidazole-4-carboxamide isomerase of Sulfurimonas denitrificans (strain ATCC 33889 / DSM 1251) (Thiomicrospira denitrificans (strain ATCC 33889 / DSM 1251)).